A 302-amino-acid polypeptide reads, in one-letter code: Sulfate adenylyltransferase subunit 2 (302 aa).

Residues 280-302 are disordered; it reads RQGRLIDSDQSASMEQKKRQGYF.

The protein belongs to the PAPS reductase family. CysD subfamily. In terms of assembly, heterodimer composed of CysD, the smaller subunit, and CysN.

The enzyme catalyses sulfate + ATP + H(+) = adenosine 5'-phosphosulfate + diphosphate. It functions in the pathway sulfur metabolism; hydrogen sulfide biosynthesis; sulfite from sulfate: step 1/3. Functionally, with CysN forms the ATP sulfurylase (ATPS) that catalyzes the adenylation of sulfate producing adenosine 5'-phosphosulfate (APS) and diphosphate, the first enzymatic step in sulfur assimilation pathway. APS synthesis involves the formation of a high-energy phosphoric-sulfuric acid anhydride bond driven by GTP hydrolysis by CysN coupled to ATP hydrolysis by CysD. The polypeptide is Sulfate adenylyltransferase subunit 2 (Shewanella frigidimarina (strain NCIMB 400)).